Reading from the N-terminus, the 577-residue chain is Protein O-linked-mannose beta-1,4-N-acetylglucosaminyltransferase 2 (577 aa).

At 1-4 (MNIA) the chain is on the cytoplasmic side. Residues 5-25 (AVFNALLVSVLATVLWKYIKL) traverse the membrane as a helical; Signal-anchor for type II membrane protein segment. Residues 26-577 (REHAFMVEEE…PFADVLLCST (552 aa)) lie on the Lumenal side of the membrane. Residues Asn-98, Asn-275, Asn-335, and Asn-540 are each glycosylated (N-linked (GlcNAc...) asparagine). The region spanning 481–577 (KVRDARCQAS…PFADVLLCST (97 aa)) is the Fibronectin type-III domain.

The protein belongs to the glycosyltransferase 61 family.

It is found in the endoplasmic reticulum membrane. The enzyme catalyses 3-O-(alpha-D-mannosyl)-L-threonyl-[protein] + UDP-N-acetyl-alpha-D-glucosamine = 3-O-(N-acetyl-beta-D-glucosaminyl-(1-&gt;4)-alpha-D-mannosyl)-L-threonyl-[protein] + UDP + H(+). It functions in the pathway protein modification; protein glycosylation. Its function is as follows. O-linked mannose beta-1,4-N-acetylglucosaminyltransferase that transfers UDP-N-acetyl-D-glucosamine to the 4-position of the mannose to generate N-acetyl-D-glucosamine-beta-1,4-O-D-mannosylprotein. Involved in the biosynthesis of the phosphorylated O-mannosyl trisaccharide (N-acetylgalactosamine-beta-3-N-acetylglucosamine-beta-4-(phosphate-6-)mannose), a carbohydrate structure present in alpha-dystroglycan (DAG1), which is required for binding laminin G-like domain-containing extracellular proteins with high affinity. The sequence is that of Protein O-linked-mannose beta-1,4-N-acetylglucosaminyltransferase 2 (POMGNT2) from Gallus gallus (Chicken).